We begin with the raw amino-acid sequence, 346 residues long: UPF0065 protein in the TAR-I ttuE-ttuC' intergenic region (346 aa).

The first 46 residues, 1–46 (MQASMLDSQWRLTIFSPRRKVKVSQMNSRFIAVLLTATILPWVAQA), serve as a signal peptide directing secretion.

It belongs to the UPF0065 (bug) family.

The protein resides in the periplasm. In Agrobacterium vitis (Rhizobium vitis), this protein is UPF0065 protein in the TAR-I ttuE-ttuC' intergenic region.